We begin with the raw amino-acid sequence, 473 residues long: Photosystem II CP43 reaction center protein (473 aa).

The propeptide occupies 1–14 (MKTLYSLRRFSHVE). Position 15 is an N-acetylthreonine (T15). T15 is modified (phosphothreonine). 5 consecutive transmembrane segments (helical) span residues 69–93 (LFEV…PHLA), 134–155 (LLGP…KDRN), 178–200 (KALY…RKIT), 255–275 (KPFA…LSYS), and 291–312 (WFNN…ASQA). E367 lines the [CaMn4O5] cluster pocket. The helical transmembrane segment at 447-471 (RARAAAAGFEKGIDRDFEPVLSMTP) threads the bilayer.

The protein belongs to the PsbB/PsbC family. PsbC subfamily. As to quaternary structure, PSII is composed of 1 copy each of membrane proteins PsbA, PsbB, PsbC, PsbD, PsbE, PsbF, PsbH, PsbI, PsbJ, PsbK, PsbL, PsbM, PsbT, PsbX, PsbY, PsbZ, Psb30/Ycf12, at least 3 peripheral proteins of the oxygen-evolving complex and a large number of cofactors. It forms dimeric complexes. It depends on Binds multiple chlorophylls and provides some of the ligands for the Ca-4Mn-5O cluster of the oxygen-evolving complex. It may also provide a ligand for a Cl- that is required for oxygen evolution. PSII binds additional chlorophylls, carotenoids and specific lipids. as a cofactor.

Its subcellular location is the plastid membrane. Its function is as follows. One of the components of the core complex of photosystem II (PSII). It binds chlorophyll and helps catalyze the primary light-induced photochemical processes of PSII. PSII is a light-driven water:plastoquinone oxidoreductase, using light energy to abstract electrons from H(2)O, generating O(2) and a proton gradient subsequently used for ATP formation. The chain is Photosystem II CP43 reaction center protein from Cuscuta obtusiflora (Peruvian dodder).